A 306-amino-acid polypeptide reads, in one-letter code: Glutathione transport system permease protein GsiC (306 aa).

The Cytoplasmic portion of the chain corresponds to M1–R8. Residues L9 to L29 traverse the membrane as a helical segment. The Periplasmic segment spans residues L30–T102. Residues F95–V292 enclose the ABC transmembrane type-1 domain. The chain crosses the membrane as a helical span at residues I103 to W123. Over R124–T134 the chain is Cytoplasmic. A helical membrane pass occupies residues L135–F155. The Periplasmic portion of the chain corresponds to S156–D168. A helical transmembrane segment spans residues S169–A189. Over R190–M228 the chain is Cytoplasmic. A helical membrane pass occupies residues I229–V249. The Periplasmic portion of the chain corresponds to E250–V278. Residues L279 to I299 traverse the membrane as a helical segment. Residues N300 to K306 lie on the Cytoplasmic side of the membrane.

The protein belongs to the binding-protein-dependent transport system permease family. In terms of assembly, the complex is composed of two ATP-binding proteins (GsiA), two transmembrane proteins (GsiC and GsiD) and a solute-binding protein (GsiB).

Its subcellular location is the cell inner membrane. Part of the ABC transporter complex GsiABCD involved in glutathione import. Probably responsible for the translocation of the substrate across the membrane. This is Glutathione transport system permease protein GsiC from Salmonella typhimurium (strain LT2 / SGSC1412 / ATCC 700720).